A 2430-amino-acid polypeptide reads, in one-letter code: Spatacsin (2430 aa).

Phosphoserine is present on residues Ser-1942 and Ser-1943.

Interacts with AP5Z1, AP5B1, AP5S1 and ZFYVE26. As to expression, ubiquitously expressed at low level. Expressed in embryonic and adult cortical projection neurons.

The protein localises to the cytoplasm. The protein resides in the cytosol. It is found in the nucleus. Its subcellular location is the cell projection. It localises to the axon. The protein localises to the dendrite. The protein resides in the synapse. May play a role in neurite plasticity by maintaining cytoskeleton stability and regulating synaptic vesicle transport. The sequence is that of Spatacsin (Spg11) from Mus musculus (Mouse).